A 172-amino-acid polypeptide reads, in one-letter code: S-ribosylhomocysteine lyase (172 aa).

Positions 54, 58, and 128 each coordinate Fe cation.

It belongs to the LuxS family. In terms of assembly, homodimer. Requires Fe cation as cofactor.

It carries out the reaction S-(5-deoxy-D-ribos-5-yl)-L-homocysteine = (S)-4,5-dihydroxypentane-2,3-dione + L-homocysteine. Its function is as follows. Involved in the synthesis of autoinducer 2 (AI-2) which is secreted by bacteria and is used to communicate both the cell density and the metabolic potential of the environment. The regulation of gene expression in response to changes in cell density is called quorum sensing. Catalyzes the transformation of S-ribosylhomocysteine (RHC) to homocysteine (HC) and 4,5-dihydroxy-2,3-pentadione (DPD). The polypeptide is S-ribosylhomocysteine lyase (Vibrio atlanticus (strain LGP32) (Vibrio splendidus (strain Mel32))).